Consider the following 95-residue polypeptide: KLESIGYLYEPLSEEYRRVIDFSDMKNLRSMFNKITIHVSDKCIQVNKGYLSDFVTSLIRLSDSDINTYDSFDITYIDPRRHITWNNILSILNEK.

The protein belongs to the chordopoxvirinae J1 family. In terms of assembly, homodimer. Part of a complex composed of A30, G7, F10 kinase, A15, D2, D3, and J1. Interacts with A45.

The protein localises to the virion. Its subcellular location is the host cytoplasm. Functionally, late protein which is a part of a large complex required for early virion morphogenesis. This complex participates in the formation of virosomes and the incorporation of virosomal contents into nascent immature virions. J1 protein is required for DNA packaging during immature virions (IV) formation. The protein is Protein J1 homolog of Sus scrofa (Pig).